The sequence spans 936 residues: MISNKRKEIDTIDGHHEKDNDDDDSDGIDNGLLTYKKFKKDFDSGSTNYRELQIIAKSLGLASNGKKQLVYNRIEGYFLSKKVKNNLTNNETNQQEEKKEEEQQQPQPQEKQYILTFKDVEPVENYFWKVFRNIVIFKHIFSNFKNKQYGYYDLIGCDRSYLNDTSNSMEIIIDNIKSNNNHQIIRNKINIANIIHKFKKNDEKTKSFYNLLFSRYSSTSTSSTIQFDENIDKWIQAMIGHVNFTALDQFIKFFKIDSEVIKKVMKIHIDPSVFGNTTYDKLKIYNYLKSINSLPTSHTLLPFISTDLSKFLSFDNKFKKLIKSYKRLIESTNLQERMEQQKQKEKIKIHPSNIKYYEKLNQIILELNEIQTSQFTNDQLNSTIKNLLNHTTPTSTSTSTPNLTITSTASNNINLKEIIKKYYKSICLFFYCTVNSATEMFFRKPLLYYLNFKKESVDKMYERVVNKWNGRSFDHQLFFQSILKDINIEKNEKFELISNVLDNKYVKTFKEYDHYIFFKAVFSSNDIELIDYFLKILMQQPNKIQKITRYPNIGKLIGNYCNLIDKKEILDFYFQNYRDESLLFDDQNEIWKQIQLELIEHYEYLMDSIGKRCKLDFTPWFDQNFLDRLNRAILKPSVYSIGFDGYFDIVFEGLVDLNIKDNKENSIINFLSNAQLKHPLDLKFFESSFNPYKGKMLTFIKFLFNNISKESIETKLKVINLKTDNKNFEEIKSKIELTTTLTATTTTTTANLLSPKKSKDVGCLTIGKTESFNFTISIRMLLVCLYNLDRVDDIIYLFDKLPEVLFNPDYFSIFTNEYCIYGISSSYYLELFINYFIENLNNNTINYLYNCLCIASKKGYTQIFKNIISSDQNSKYLLKIQTKSNQSSLFDSKLLNDIVVKSINSSNFELSNLLIDFIDFSAKDKNSLKMKILKSK.

The span at 1–19 (MISNKRKEIDTIDGHHEKD) shows a compositional bias: basic and acidic residues. Residues 1 to 30 (MISNKRKEIDTIDGHHEKDNDDDDSDGIDN) form a disordered region. An SAP domain is found at 44-78 (SGSTNYRELQIIAKSLGLASNGKKQLVYNRIEGYF). The disordered stretch occupies residues 91 to 110 (ETNQQEEKKEEEQQQPQPQE).

This sequence belongs to the UPF0746 family.

This chain is UPF0746 protein DDB_G0280787, found in Dictyostelium discoideum (Social amoeba).